We begin with the raw amino-acid sequence, 440 residues long: Chromosome partition protein MukF (440 aa).

The interval 208–236 is leucine-zipper; that stretch reads LDETSGNLRELQDTLNAAGDKLQSQLLRI.

This sequence belongs to the MukF family. Interacts, and probably forms a ternary complex, with MukE and MukB via its C-terminal region. The complex formation is stimulated by calcium or magnesium. It is required for an interaction between MukE and MukB.

It is found in the cytoplasm. Its subcellular location is the nucleoid. In terms of biological role, involved in chromosome condensation, segregation and cell cycle progression. May participate in facilitating chromosome segregation by condensation DNA from both sides of a centrally located replisome during cell division. Not required for mini-F plasmid partitioning. Probably acts via its interaction with MukB and MukE. Overexpression results in anucleate cells. It has a calcium binding activity. This Histophilus somni (strain 2336) (Haemophilus somnus) protein is Chromosome partition protein MukF.